We begin with the raw amino-acid sequence, 348 residues long: NADH-quinone oxidoreductase subunit H (348 aa).

8 helical membrane-spanning segments follow: residues 21–41 (IIGILVIALPLMLAVAMIIYA), 87–107 (GLFLLAPIITFTVALIVWAVI), 120–140 (IGLLYVLAASSIGVYGVIIAG), 166–186 (IGFVLISVVLWTGSFNMSAIV), 193–213 (IFGFINGYGFNPLLFPMAVVF), 258–278 (NVILMCGLNAILFWGGWLPPV), 283–303 (LYMVPGIIWFFAKLLFFFFVF), and 323–343 (WKVFLPLSLFWVFLVSGWLML).

The protein belongs to the complex I subunit 1 family. In terms of assembly, NDH-1 is composed of 14 different subunits. Subunits NuoA, H, J, K, L, M, N constitute the membrane sector of the complex.

The protein localises to the cell inner membrane. It carries out the reaction a quinone + NADH + 5 H(+)(in) = a quinol + NAD(+) + 4 H(+)(out). Functionally, NDH-1 shuttles electrons from NADH, via FMN and iron-sulfur (Fe-S) centers, to quinones in the respiratory chain. The immediate electron acceptor for the enzyme in this species is believed to be ubiquinone. Couples the redox reaction to proton translocation (for every two electrons transferred, four hydrogen ions are translocated across the cytoplasmic membrane), and thus conserves the redox energy in a proton gradient. This subunit may bind ubiquinone. In Rhizorhabdus wittichii (strain DSM 6014 / CCUG 31198 / JCM 15750 / NBRC 105917 / EY 4224 / RW1) (Sphingomonas wittichii), this protein is NADH-quinone oxidoreductase subunit H.